Here is a 188-residue protein sequence, read N- to C-terminus: ATP synthase subunit delta (188 aa).

The protein belongs to the ATPase delta chain family. As to quaternary structure, F-type ATPases have 2 components, F(1) - the catalytic core - and F(0) - the membrane proton channel. F(1) has five subunits: alpha(3), beta(3), gamma(1), delta(1), epsilon(1). F(0) has three main subunits: a(1), b(2) and c(10-14). The alpha and beta chains form an alternating ring which encloses part of the gamma chain. F(1) is attached to F(0) by a central stalk formed by the gamma and epsilon chains, while a peripheral stalk is formed by the delta and b chains.

It localises to the cell membrane. In terms of biological role, f(1)F(0) ATP synthase produces ATP from ADP in the presence of a proton or sodium gradient. F-type ATPases consist of two structural domains, F(1) containing the extramembraneous catalytic core and F(0) containing the membrane proton channel, linked together by a central stalk and a peripheral stalk. During catalysis, ATP synthesis in the catalytic domain of F(1) is coupled via a rotary mechanism of the central stalk subunits to proton translocation. This protein is part of the stalk that links CF(0) to CF(1). It either transmits conformational changes from CF(0) to CF(1) or is implicated in proton conduction. The polypeptide is ATP synthase subunit delta (Lawsonia intracellularis (strain PHE/MN1-00)).